Consider the following 520-residue polypeptide: Peptidoglycan-recognition protein LC (520 aa).

2 stretches are compositionally biased toward polar residues: residues 1–14 (MPFS…QCSN) and 27–36 (KNCSTSSTDS). Disordered regions lie at residues 1 to 78 (MPFS…RISV) and 239 to 278 (DKWK…AQTP). The Cytoplasmic segment spans residues 1–291 (MPFSNETEMS…PFLPNTVGRK (291 aa)). Composition is skewed to basic and acidic residues over residues 48–58 (RPEKETKDRGT) and 66–78 (KSEE…RISV). Residues 292 to 312 (AVTVTVVFVTLTFLLGIVLAT) traverse the membrane as a helical; Signal-anchor for type II membrane protein segment. The Extracellular segment spans residues 313–520 (TTNLFGKTLN…ASFANWTHWS (208 aa)). The N-linked (GlcNAc...) asparagine glycan is linked to asparagine 389. Cysteines 390 and 396 form a disulfide. Residues 412-490 (QKCDIAYNFL…KLGKIAPSYR (79 aa)) enclose the N-acetylmuramoyl-L-alanine amidase domain. A glycan (N-linked (GlcNAc...) asparagine) is linked at asparagine 515.

It belongs to the N-acetylmuramoyl-L-alanine amidase 2 family. Proteolytically cleaved, probably by a metaloprotease such as Mmp2; proteolytic cleavage leads to activation of the imd/Relish signaling pathway. As to expression, expressed in the fat body and hemocytes.

It is found in the membrane. With respect to regulation, activated by proteolytic cleavage in response to Gram-negative bacterial infection; cleavage may be mediated by endogenous proteases, such as the metalloprotease Mmp2 or elastase, or by bacterially expressed proteases such as the surface serine protease OmpT. Functionally, major activator of the imd/Relish pathway and is likely to encode a pattern recognition molecule for the humoral immune response. Required for Relish processing and nuclear translocation following proteolytic cleavage. Involved in the response to lipopolysaccharide (LPS) and peptidoglycan of Gram-negative bacteria. The different isoforms probably display different recognition capabilities to various microbial patterns. In terms of biological role, mediates the response to LPS and Gram-negative bacteria. Its function is as follows. Mediates the response to LPS, peptidoglycan and Gram-negative bacteria. The chain is Peptidoglycan-recognition protein LC (PGRP-LC) from Drosophila melanogaster (Fruit fly).